The sequence spans 2429 residues: Reducing polyketide synthase ppsB (2429 aa).

Residues 4-442 form the Ketosynthase family 3 (KS3) domain; the sequence is DERVAIIGTG…GTNAHAILES (439 aa). Residues cysteine 177, histidine 317, and histidine 362 each act as for beta-ketoacyl synthase activity in the active site. The segment at 558 to 873 is malonyl-CoA:ACP transacylase (MAT) domain; that stretch reads VFTGQGAQWP…PYIGLAHRGE (316 aa). The For acyl/malonyl transferase activity role is filled by serine 652. The interval 945–1075 is N-terminal hotdog fold; sequence HPLLGVLSSE…GRVILALGEA (131 aa). The interval 945–1227 is product template (PT) domain; it reads HPLLGVLSSE…QLEGIHLTLS (283 aa). The PKS/mFAS DH domain maps to 945-1233; it reads HPLLGVLSSE…LTLSKPKNSS (289 aa). The tract at residues 1090–1233 is C-terminal hotdog fold; it reads SYPMNVDKFY…LTLSKPKNSS (144 aa). The tract at residues 1409-2158 is methyltransferase (CMeT) domain; it reads LEVGAGTGSA…ISDLYDQLTS (750 aa). The Carrier domain maps to 2350-2425; it reads EIILQLFKEK…SMVDEVVKRR (76 aa). Serine 2385 bears the O-(pantetheine 4'-phosphoryl)serine mark.

The protein operates within secondary metabolite biosynthesis. Reducing polyketide synthase; part of the gene cluster that mediates the biosynthesis of 2,4'-dihydroxy-3'-methoxypropiophenone. The first step of the pathway is the conversion of acetate into acetyl-CoA by the acyl-CoA ligase ppsA. Acetyl-CoA is then used as a starter unit by the polyketide synthase ppsB and condensed with 4 malonyl-CoA unit to produce the pentaketide backbone. During polyketide extension, the polykedite chain is probably reduced and dehydrated by the KR and PT domains, respectively. O-methylation seems to be catalyzed by an unknown methyltransferase rather than by the CMeT domain of ppsB. Two hydroxylations and one further decarboxylation step catalyzed by yet unknown enzymes are then required to yield 4'-hydroxy-3'-methoxypropiophenone. PpsC functions as a carrier protein to transport 4'-hydroxy-3'-methoxypropiophenone to a specific cell compartment in which 4'-hydroxy-3'-methoxypropiophenone is hydroxylated to 2,4'-dihydroxy-3'-methoxypropiophenone by a still to be identified enzyme. This Aspergillus oryzae (strain ATCC 42149 / RIB 40) (Yellow koji mold) protein is Reducing polyketide synthase ppsB.